Reading from the N-terminus, the 448-residue chain is Phosphoglucosamine mutase (448 aa).

The active-site Phosphoserine intermediate is the Ser-102. Ser-102, Asp-242, Asp-244, and Asp-246 together coordinate Mg(2+). Ser-102 bears the Phosphoserine mark.

This sequence belongs to the phosphohexose mutase family. Mg(2+) is required as a cofactor. In terms of processing, activated by phosphorylation.

It carries out the reaction alpha-D-glucosamine 1-phosphate = D-glucosamine 6-phosphate. Catalyzes the conversion of glucosamine-6-phosphate to glucosamine-1-phosphate. This Brevibacillus brevis (strain 47 / JCM 6285 / NBRC 100599) protein is Phosphoglucosamine mutase.